Here is a 2325-residue protein sequence, read N- to C-terminus: Otogelin-like protein (2325 aa).

An N-terminal signal peptide occupies residues 1 to 22; it reads MVPWRALSLPILLVSLRGYVCA. Residues 112–288 form the VWFD 1 domain; the sequence is GICKTWGQYH…VLTPDDTKCV (177 aa). Intrachain disulfides connect cysteine 114-cysteine 248 and cysteine 136-cysteine 287. An N-linked (GlcNAc...) asparagine glycan is attached at asparagine 425. The VWFD 2 domain occupies 472 to 645; sequence VQCSVVGDSH…HAWRVSSTCF (174 aa). 3 cysteine pairs are disulfide-bonded: cysteine 474–cysteine 609, cysteine 496–cysteine 644, and cysteine 518–cysteine 526. The region spanning 736-791 is the TIL 1 domain; sequence CQKGMLYHHCSSLCLRSCTSLSSPEQCKDDCAEGCNCPEGKFYEETLNFCVPIYHC. N-linked (GlcNAc...) asparagine glycosylation is found at asparagine 817 and asparagine 867. The region spanning 937–1114 is the VWFD 3 domain; the sequence is AVCTVYGDRH…DLMEALKPCE (178 aa). Intrachain disulfides connect cysteine 939-cysteine 1069, cysteine 961-cysteine 1113, and cysteine 983-cysteine 990. N-linked (GlcNAc...) asparagine glycosylation is present at asparagine 1280. Residues 1366–1418 enclose the TIL 2 domain; it reads RYEPCATPCFKTCSDPEALACTFLPPVEGCLPYCPKNMILDETTLKCVHPEDC. One can recognise a VWFD 4 domain in the interval 1506-1695; that stretch reads CRCSMLSELS…SWEIEKSFEV (190 aa). Intrachain disulfides connect cysteine 1508–cysteine 1655 and cysteine 1549–cysteine 1571. 2 N-linked (GlcNAc...) asparagine glycosylation sites follow: asparagine 1576 and asparagine 2170. Intrachain disulfides connect cysteine 2233/cysteine 2289, cysteine 2254/cysteine 2303, cysteine 2265/cysteine 2320, and cysteine 2269/cysteine 2322. The region spanning 2233–2325 is the CTCK domain; it reads CKREERICQK…EPIDCTCQWN (93 aa). An N-linked (GlcNAc...) asparagine glycan is attached at asparagine 2296.

This sequence belongs to the otogelin family.

The protein localises to the secreted. The chain is Otogelin-like protein (Otogl) from Mus musculus (Mouse).